The primary structure comprises 296 residues: Lipoyl synthase (296 aa).

Cys-37, Cys-42, Cys-48, Cys-63, Cys-67, Cys-70, and Ser-276 together coordinate [4Fe-4S] cluster. The Radical SAM core domain maps to 49 to 265; that stretch reads WSKKHTTVMI…ERVAKTKGFL (217 aa).

It belongs to the radical SAM superfamily. Lipoyl synthase family. Requires [4Fe-4S] cluster as cofactor.

It localises to the cytoplasm. The catalysed reaction is [[Fe-S] cluster scaffold protein carrying a second [4Fe-4S](2+) cluster] + N(6)-octanoyl-L-lysyl-[protein] + 2 oxidized [2Fe-2S]-[ferredoxin] + 2 S-adenosyl-L-methionine + 4 H(+) = [[Fe-S] cluster scaffold protein] + N(6)-[(R)-dihydrolipoyl]-L-lysyl-[protein] + 4 Fe(3+) + 2 hydrogen sulfide + 2 5'-deoxyadenosine + 2 L-methionine + 2 reduced [2Fe-2S]-[ferredoxin]. Its pathway is protein modification; protein lipoylation via endogenous pathway; protein N(6)-(lipoyl)lysine from octanoyl-[acyl-carrier-protein]: step 2/2. Its function is as follows. Catalyzes the radical-mediated insertion of two sulfur atoms into the C-6 and C-8 positions of the octanoyl moiety bound to the lipoyl domains of lipoate-dependent enzymes, thereby converting the octanoylated domains into lipoylated derivatives. This is Lipoyl synthase from Rickettsia peacockii (strain Rustic).